The primary structure comprises 319 residues: Nucleotide-binding protein Mvan_2698 (319 aa).

Residues 1-12 (MTEQGMHQELRE) are compositionally biased toward basic and acidic residues. The segment at 1 to 26 (MTEQGMHQELREGAGTAGDEGGLEAA) is disordered. 43-50 (GLSGAGRG) contacts ATP. 94–97 (DVRS) lines the GTP pocket.

It belongs to the RapZ-like family.

In terms of biological role, displays ATPase and GTPase activities. The protein is Nucleotide-binding protein Mvan_2698 of Mycolicibacterium vanbaalenii (strain DSM 7251 / JCM 13017 / BCRC 16820 / KCTC 9966 / NRRL B-24157 / PYR-1) (Mycobacterium vanbaalenii).